The following is a 710-amino-acid chain: Polyribonucleotide nucleotidyltransferase (710 aa).

Positions 485 and 491 each coordinate Mg(2+). The region spanning 552–611 is the KH domain; it reads PKILTLTINPDKIRDVIGPSGKVINKIIEETGVKIDIEQDGTVYISSLDTAMNQKAKQII. An S1 motif domain is found at 621-689; it reads GETYHGKVKR…NQGRVNLSRK (69 aa).

This sequence belongs to the polyribonucleotide nucleotidyltransferase family. Mg(2+) serves as cofactor.

It localises to the cytoplasm. The catalysed reaction is RNA(n+1) + phosphate = RNA(n) + a ribonucleoside 5'-diphosphate. Its function is as follows. Involved in mRNA degradation. Catalyzes the phosphorolysis of single-stranded polyribonucleotides processively in the 3'- to 5'-direction. This is Polyribonucleotide nucleotidyltransferase from Shouchella clausii (strain KSM-K16) (Alkalihalobacillus clausii).